We begin with the raw amino-acid sequence, 321 residues long: Phospho-N-acetylmuramoyl-pentapeptide-transferase (321 aa).

Transmembrane regions (helical) follow at residues 1-21 (MIYVLAIIAFLITLILVPILI), 49-69 (TMGGLTFLISIIITTIIAIIF), 77-97 (ILLLFVTVGFGLIGFVDDYII), 112-132 (FLAQIAIAVIFFILSDVFNMI), 140-160 (IPFTNVSIPLSVVYVVFIVFW), 176-196 (GLATGLSIIAFAMYAIMSFML), 200-220 (AVGTFCIIMVFALLGFLIYNV), 225-245 (VFMGDTGSLALGGIIATVSIM), 250-270 (ISLIFIGFVFVAETLSVILQV), and 300-320 (VVSVFWIVGLITGLIGLWIGV).

This sequence belongs to the glycosyltransferase 4 family. MraY subfamily. Mg(2+) serves as cofactor.

It is found in the cell membrane. The catalysed reaction is UDP-N-acetyl-alpha-D-muramoyl-L-alanyl-gamma-D-glutamyl-L-lysyl-D-alanyl-D-alanine + di-trans,octa-cis-undecaprenyl phosphate = Mur2Ac(oyl-L-Ala-gamma-D-Glu-L-Lys-D-Ala-D-Ala)-di-trans,octa-cis-undecaprenyl diphosphate + UMP. It participates in cell wall biogenesis; peptidoglycan biosynthesis. Catalyzes the initial step of the lipid cycle reactions in the biosynthesis of the cell wall peptidoglycan: transfers peptidoglycan precursor phospho-MurNAc-pentapeptide from UDP-MurNAc-pentapeptide onto the lipid carrier undecaprenyl phosphate, yielding undecaprenyl-pyrophosphoryl-MurNAc-pentapeptide, known as lipid I. In Staphylococcus carnosus (strain TM300), this protein is Phospho-N-acetylmuramoyl-pentapeptide-transferase.